The primary structure comprises 983 residues: Bifunctional glutamine synthetase adenylyltransferase/adenylyl-removing enzyme (983 aa).

Residues 1 to 468 are adenylyl removase; the sequence is MTVENAKALF…KQYAALFAQA (468 aa). Positions 473–983 are adenylyl transferase; that stretch reads AASGNLVFTG…FDKLVGHGAD (511 aa).

It belongs to the GlnE family. The cofactor is Mg(2+).

It carries out the reaction [glutamine synthetase]-O(4)-(5'-adenylyl)-L-tyrosine + phosphate = [glutamine synthetase]-L-tyrosine + ADP. It catalyses the reaction [glutamine synthetase]-L-tyrosine + ATP = [glutamine synthetase]-O(4)-(5'-adenylyl)-L-tyrosine + diphosphate. Involved in the regulation of glutamine synthetase GlnA, a key enzyme in the process to assimilate ammonia. When cellular nitrogen levels are high, the C-terminal adenylyl transferase (AT) inactivates GlnA by covalent transfer of an adenylyl group from ATP to specific tyrosine residue of GlnA, thus reducing its activity. Conversely, when nitrogen levels are low, the N-terminal adenylyl removase (AR) activates GlnA by removing the adenylyl group by phosphorolysis, increasing its activity. The regulatory region of GlnE binds the signal transduction protein PII (GlnB) which indicates the nitrogen status of the cell. The sequence is that of Bifunctional glutamine synthetase adenylyltransferase/adenylyl-removing enzyme from Brucella suis biovar 1 (strain 1330).